Reading from the N-terminus, the 359-residue chain is DNA polymerase IV (359 aa).

In terms of domain architecture, UmuC spans 4–184 (IVHVDMDAFY…LKVNRIPGVG (181 aa)). Positions 8 and 102 each coordinate Mg(2+). E103 is an active-site residue.

The protein belongs to the DNA polymerase type-Y family. Monomer. Mg(2+) serves as cofactor.

It is found in the cytoplasm. The enzyme catalyses DNA(n) + a 2'-deoxyribonucleoside 5'-triphosphate = DNA(n+1) + diphosphate. Its function is as follows. Poorly processive, error-prone DNA polymerase involved in untargeted mutagenesis. Copies undamaged DNA at stalled replication forks, which arise in vivo from mismatched or misaligned primer ends. These misaligned primers can be extended by PolIV. Exhibits no 3'-5' exonuclease (proofreading) activity. May be involved in translesional synthesis, in conjunction with the beta clamp from PolIII. This is DNA polymerase IV from Xanthomonas euvesicatoria pv. vesicatoria (strain 85-10) (Xanthomonas campestris pv. vesicatoria).